A 477-amino-acid chain; its full sequence is Ribulose bisphosphate carboxylase large chain (477 aa).

A propeptide spanning residues 1-2 (MS) is cleaved from the precursor. Pro3 carries the N-acetylproline modification. Residues Asn123 and Thr173 each contribute to the substrate site. Lys175 (proton acceptor) is an active-site residue. Substrate is bound at residue Lys177. Mg(2+)-binding residues include Lys201, Asp203, and Glu204. Residue Lys201 is modified to N6-carboxylysine. His294 acts as the Proton acceptor in catalysis. Substrate contacts are provided by Arg295, His327, and Ser379.

Belongs to the RuBisCO large chain family. Type I subfamily. As to quaternary structure, heterohexadecamer of 8 large chains and 8 small chains; disulfide-linked. The disulfide link is formed within the large subunit homodimers. Mg(2+) serves as cofactor. The disulfide bond which can form in the large chain dimeric partners within the hexadecamer appears to be associated with oxidative stress and protein turnover.

The protein resides in the plastid. Its subcellular location is the chloroplast. It catalyses the reaction 2 (2R)-3-phosphoglycerate + 2 H(+) = D-ribulose 1,5-bisphosphate + CO2 + H2O. It carries out the reaction D-ribulose 1,5-bisphosphate + O2 = 2-phosphoglycolate + (2R)-3-phosphoglycerate + 2 H(+). In terms of biological role, ruBisCO catalyzes two reactions: the carboxylation of D-ribulose 1,5-bisphosphate, the primary event in carbon dioxide fixation, as well as the oxidative fragmentation of the pentose substrate in the photorespiration process. Both reactions occur simultaneously and in competition at the same active site. This Lolium perenne (Perennial ryegrass) protein is Ribulose bisphosphate carboxylase large chain.